Reading from the N-terminus, the 257-residue chain is Ribosomal RNA small subunit methyltransferase J (257 aa).

Residues 107–108 (RD), 123–124 (ER), and Asp-177 each bind S-adenosyl-L-methionine.

The protein belongs to the methyltransferase superfamily. RsmJ family.

It localises to the cytoplasm. The catalysed reaction is guanosine(1516) in 16S rRNA + S-adenosyl-L-methionine = N(2)-methylguanosine(1516) in 16S rRNA + S-adenosyl-L-homocysteine + H(+). Functionally, specifically methylates the guanosine in position 1516 of 16S rRNA. This is Ribosomal RNA small subunit methyltransferase J from Haemophilus influenzae (strain ATCC 51907 / DSM 11121 / KW20 / Rd).